A 256-amino-acid polypeptide reads, in one-letter code: 3-dehydroquinate dehydratase (256 aa).

Residues 46 to 48 (EWR) and arginine 82 contribute to the 3-dehydroquinate site. The active-site Proton donor/acceptor is the histidine 144. The active-site Schiff-base intermediate with substrate is lysine 171. Residues arginine 213, serine 232, and glutamine 236 each contribute to the 3-dehydroquinate site.

The protein belongs to the type-I 3-dehydroquinase family. As to quaternary structure, homodimer.

It carries out the reaction 3-dehydroquinate = 3-dehydroshikimate + H2O. It participates in metabolic intermediate biosynthesis; chorismate biosynthesis; chorismate from D-erythrose 4-phosphate and phosphoenolpyruvate: step 3/7. In terms of biological role, involved in the third step of the chorismate pathway, which leads to the biosynthesis of aromatic amino acids. Catalyzes the cis-dehydration of 3-dehydroquinate (DHQ) and introduces the first double bond of the aromatic ring to yield 3-dehydroshikimate. This chain is 3-dehydroquinate dehydratase, found in Shouchella clausii (strain KSM-K16) (Alkalihalobacillus clausii).